The primary structure comprises 429 residues: Adenylosuccinate synthetase (429 aa).

GTP-binding positions include 12–18 (GDEGKGK) and 40–42 (GHT). Catalysis depends on Asp-13, which acts as the Proton acceptor. Asp-13 and Gly-40 together coordinate Mg(2+). IMP is bound by residues 13 to 16 (DEGK), 38 to 41 (NAGH), Thr-129, Arg-143, Gln-224, Thr-239, and Arg-303. His-41 (proton donor) is an active-site residue. 299-305 (VTTGRAR) is a binding site for substrate. GTP is bound by residues Arg-305, 331–333 (KLD), and 413–415 (GVG).

The protein belongs to the adenylosuccinate synthetase family. In terms of assembly, homodimer. It depends on Mg(2+) as a cofactor.

The protein localises to the cytoplasm. It carries out the reaction IMP + L-aspartate + GTP = N(6)-(1,2-dicarboxyethyl)-AMP + GDP + phosphate + 2 H(+). The protein operates within purine metabolism; AMP biosynthesis via de novo pathway; AMP from IMP: step 1/2. In terms of biological role, plays an important role in the de novo pathway of purine nucleotide biosynthesis. Catalyzes the first committed step in the biosynthesis of AMP from IMP. The polypeptide is Adenylosuccinate synthetase (Rhodococcus opacus (strain B4)).